The primary structure comprises 516 residues: GMP synthase [glutamine-hydrolyzing] (516 aa).

Positions 8–198 (KILILDFGSQ…VVNICGCDTL (191 aa)) constitute a Glutamine amidotransferase type-1 domain. The Nucleophile role is filled by cysteine 84. Catalysis depends on residues histidine 172 and glutamate 174. The region spanning 199–391 (WNIENIIEND…LGLPYNMLYR (193 aa)) is the GMPS ATP-PPase domain. 226 to 232 (SGGVDSS) is a binding site for ATP.

Homodimer.

It carries out the reaction XMP + L-glutamine + ATP + H2O = GMP + L-glutamate + AMP + diphosphate + 2 H(+). It functions in the pathway purine metabolism; GMP biosynthesis; GMP from XMP (L-Gln route): step 1/1. Catalyzes the synthesis of GMP from XMP. This is GMP synthase [glutamine-hydrolyzing] from Francisella tularensis subsp. tularensis (strain FSC 198).